We begin with the raw amino-acid sequence, 186 residues long: Potassium-transporting ATPase KdpC subunit (186 aa).

A helical membrane pass occupies residues 9-29 (AAVVLFGGCLLVLGLLYPLAM).

Belongs to the KdpC family. In terms of assembly, the system is composed of three essential subunits: KdpA, KdpB and KdpC.

Its subcellular location is the cell membrane. Part of the high-affinity ATP-driven potassium transport (or Kdp) system, which catalyzes the hydrolysis of ATP coupled with the electrogenic transport of potassium into the cytoplasm. This subunit acts as a catalytic chaperone that increases the ATP-binding affinity of the ATP-hydrolyzing subunit KdpB by the formation of a transient KdpB/KdpC/ATP ternary complex. This chain is Potassium-transporting ATPase KdpC subunit, found in Methanosphaerula palustris (strain ATCC BAA-1556 / DSM 19958 / E1-9c).